The chain runs to 540 residues: Phosphomethylpyrimidine synthase (540 aa).

Substrate contacts are provided by residues N143, M172, Y201, H237, 257–259 (SRG), 298–301 (DGLR), and E337. H341 lines the Zn(2+) pocket. Y364 contributes to the substrate binding site. Residue H405 participates in Zn(2+) binding. Residues C485, C488, and C493 each contribute to the [4Fe-4S] cluster site.

This sequence belongs to the ThiC family. It depends on [4Fe-4S] cluster as a cofactor.

The enzyme catalyses 5-amino-1-(5-phospho-beta-D-ribosyl)imidazole + S-adenosyl-L-methionine = 4-amino-2-methyl-5-(phosphooxymethyl)pyrimidine + CO + 5'-deoxyadenosine + formate + L-methionine + 3 H(+). It participates in cofactor biosynthesis; thiamine diphosphate biosynthesis. Its function is as follows. Catalyzes the synthesis of the hydroxymethylpyrimidine phosphate (HMP-P) moiety of thiamine from aminoimidazole ribotide (AIR) in a radical S-adenosyl-L-methionine (SAM)-dependent reaction. The polypeptide is Phosphomethylpyrimidine synthase (Mycobacterium avium (strain 104)).